The following is a 221-amino-acid chain: 7-cyano-7-deazaguanine synthase (221 aa).

L7–L17 serves as a coordination point for ATP. The Zn(2+) site is built by C183, C191, C194, and C197.

This sequence belongs to the QueC family. In terms of assembly, homodimer. The cofactor is Zn(2+).

It carries out the reaction 7-carboxy-7-deazaguanine + NH4(+) + ATP = 7-cyano-7-deazaguanine + ADP + phosphate + H2O + H(+). The protein operates within purine metabolism; 7-cyano-7-deazaguanine biosynthesis. Catalyzes the ATP-dependent conversion of 7-carboxy-7-deazaguanine (CDG) to 7-cyano-7-deazaguanine (preQ(0)). This is 7-cyano-7-deazaguanine synthase from Caldicellulosiruptor bescii (strain ATCC BAA-1888 / DSM 6725 / KCTC 15123 / Z-1320) (Anaerocellum thermophilum).